The chain runs to 339 residues: DNA-directed RNA polymerase subunit alpha (339 aa).

Residues 1–233 form an alpha N-terminal domain (alpha-NTD) region; the sequence is MVREEVAGST…DLFLPFLHAE (233 aa). The segment at 264–339 is alpha C-terminal domain (alpha-CTD); the sequence is KKGIPLNCIF…IDLLKNKLSF (76 aa).

Belongs to the RNA polymerase alpha chain family. In plastids the minimal PEP RNA polymerase catalytic core is composed of four subunits: alpha, beta, beta', and beta''. When a (nuclear-encoded) sigma factor is associated with the core the holoenzyme is formed, which can initiate transcription.

The protein resides in the plastid. It localises to the chloroplast. It carries out the reaction RNA(n) + a ribonucleoside 5'-triphosphate = RNA(n+1) + diphosphate. Its function is as follows. DNA-dependent RNA polymerase catalyzes the transcription of DNA into RNA using the four ribonucleoside triphosphates as substrates. The polypeptide is DNA-directed RNA polymerase subunit alpha (Thinopyrum bessarabicum (Wheatgrass)).